The chain runs to 318 residues: Chlorophyllase-2 (318 aa).

A GXSXG motif is present at residues 136-140; sequence GHSRG. Catalysis depends on serine 138, which acts as the Nucleophile. Residues aspartate 167 and histidine 244 each act as charge relay system in the active site.

It belongs to the AB hydrolase superfamily. Lipase family. In terms of tissue distribution, expressed in leaves, flowers and flower buds, but not in roots.

Its subcellular location is the cytoplasm. The protein localises to the cytosol. It carries out the reaction a chlorophyll + H2O = a chlorophyllide + phytol + H(+). The enzyme catalyses chlorophyll a + H2O = phytol + chlorophyllide a + H(+). It functions in the pathway porphyrin-containing compound metabolism; chlorophyll degradation. Catalyzes the hydrolysis of ester bond in chlorophyll to yield chlorophyllide and phytol. Does not seem to be required for chlorophyll degradation during senescence. This Arabidopsis thaliana (Mouse-ear cress) protein is Chlorophyllase-2.